The following is a 254-amino-acid chain: Adenosylcobinamide-GDP ribazoletransferase (254 aa).

7 helical membrane-spanning segments follow: residues Ser-27–Ala-47, Gly-50–Leu-70, Val-104–Leu-124, Ala-131–Ala-151, Ala-170–Leu-190, Val-194–Leu-214, and Leu-233–Ile-253.

This sequence belongs to the CobS family. Mg(2+) serves as cofactor.

The protein localises to the cell inner membrane. It catalyses the reaction alpha-ribazole + adenosylcob(III)inamide-GDP = adenosylcob(III)alamin + GMP + H(+). The enzyme catalyses alpha-ribazole 5'-phosphate + adenosylcob(III)inamide-GDP = adenosylcob(III)alamin 5'-phosphate + GMP + H(+). Its pathway is cofactor biosynthesis; adenosylcobalamin biosynthesis; adenosylcobalamin from cob(II)yrinate a,c-diamide: step 7/7. Functionally, joins adenosylcobinamide-GDP and alpha-ribazole to generate adenosylcobalamin (Ado-cobalamin). Also synthesizes adenosylcobalamin 5'-phosphate from adenosylcobinamide-GDP and alpha-ribazole 5'-phosphate. This Chlorobaculum parvum (strain DSM 263 / NCIMB 8327) (Chlorobium vibrioforme subsp. thiosulfatophilum) protein is Adenosylcobinamide-GDP ribazoletransferase.